The chain runs to 133 residues: Small ribosomal subunit protein uS8 (133 aa).

The protein belongs to the universal ribosomal protein uS8 family. As to quaternary structure, part of the 30S ribosomal subunit.

One of the primary rRNA binding proteins, it binds directly to 16S rRNA central domain where it helps coordinate assembly of the platform of the 30S subunit. The protein is Small ribosomal subunit protein uS8 of Ignicoccus hospitalis (strain KIN4/I / DSM 18386 / JCM 14125).